The primary structure comprises 244 residues: Protein pendolino (244 aa).

Residues 20–176 form the UBC core domain; the sequence is QQEYKILAEY…VQENIKESKE (157 aa).

It belongs to the ubiquitin-conjugating enzyme family. FTS subfamily. Interacts (via N-terminus) with cav/HOAP (via N-terminus); the interaction is direct. Probably interacts (via N-terminus and UBC domain) with ver and moi.

Its subcellular location is the nucleus. It localises to the nucleolus. The protein resides in the chromosome. Functionally, required for efficient DNA replication, probably through involvement in telomere replication. May have a role in telomere capping of heterochromatic chromosome ends. The polypeptide is Protein pendolino (Drosophila melanogaster (Fruit fly)).